The following is a 418-amino-acid chain: 3-isopropylmalate dehydratase large subunit 1 (418 aa).

Residues cysteine 298, cysteine 358, and cysteine 361 each contribute to the [4Fe-4S] cluster site.

Belongs to the aconitase/IPM isomerase family. LeuC type 2 subfamily. Heterodimer of LeuC and LeuD. [4Fe-4S] cluster serves as cofactor.

The catalysed reaction is (2R,3S)-3-isopropylmalate = (2S)-2-isopropylmalate. It functions in the pathway amino-acid biosynthesis; L-leucine biosynthesis; L-leucine from 3-methyl-2-oxobutanoate: step 2/4. In terms of biological role, catalyzes the isomerization between 2-isopropylmalate and 3-isopropylmalate, via the formation of 2-isopropylmaleate. This Methanopyrus kandleri (strain AV19 / DSM 6324 / JCM 9639 / NBRC 100938) protein is 3-isopropylmalate dehydratase large subunit 1.